A 79-amino-acid polypeptide reads, in one-letter code: Small ribosomal subunit protein bS18 (79 aa).

Belongs to the bacterial ribosomal protein bS18 family. In terms of assembly, part of the 30S ribosomal subunit. Forms a tight heterodimer with protein bS6.

Binds as a heterodimer with protein bS6 to the central domain of the 16S rRNA, where it helps stabilize the platform of the 30S subunit. The protein is Small ribosomal subunit protein bS18 of Nitrobacter hamburgensis (strain DSM 10229 / NCIMB 13809 / X14).